The primary structure comprises 196 residues: Holliday junction branch migration complex subunit RuvA (196 aa).

Residues 1–63 (MINKIYGKVI…ENELKLFGFL (63 aa)) are domain I. The segment at 64–139 (NSDERETFKS…KLLINNELES (76 aa)) is domain II. S139 is a region of interest (flexible linker). The segment at 139-196 (SSLFRFKELEESIVSMGFDRKIVNSKLKEAFNLVEFSNLKDSEKEQFLFKEVLKRMSN) is domain III.

It belongs to the RuvA family. In terms of assembly, homotetramer. Forms an RuvA(8)-RuvB(12)-Holliday junction (HJ) complex. HJ DNA is sandwiched between 2 RuvA tetramers; dsDNA enters through RuvA and exits via RuvB. An RuvB hexamer assembles on each DNA strand where it exits the tetramer. Each RuvB hexamer is contacted by two RuvA subunits (via domain III) on 2 adjacent RuvB subunits; this complex drives branch migration. In the full resolvosome a probable DNA-RuvA(4)-RuvB(12)-RuvC(2) complex forms which resolves the HJ.

It localises to the cytoplasm. Functionally, the RuvA-RuvB-RuvC complex processes Holliday junction (HJ) DNA during genetic recombination and DNA repair, while the RuvA-RuvB complex plays an important role in the rescue of blocked DNA replication forks via replication fork reversal (RFR). RuvA specifically binds to HJ cruciform DNA, conferring on it an open structure. The RuvB hexamer acts as an ATP-dependent pump, pulling dsDNA into and through the RuvAB complex. HJ branch migration allows RuvC to scan DNA until it finds its consensus sequence, where it cleaves and resolves the cruciform DNA. This Borreliella afzelii (strain PKo) (Borrelia afzelii) protein is Holliday junction branch migration complex subunit RuvA.